Reading from the N-terminus, the 604-residue chain is Cell division cycle protein CDT1 (604 aa).

The protein belongs to the Cdt1 family. As to quaternary structure, associates with the MCM2-7 complex. Interacts with MCM2, ORC1, ORC2 and ORC6.

The protein resides in the cytoplasm. It is found in the nucleus. In terms of biological role, DNA replication licensing factor, required for pre-replication complex assembly. Faithful duplication of the genetic material requires 'once per cell cycle' DNA replication initiation and elongation. Central to this control is the tightly regulated formation of prereplicative complexes (preRCs) at future origins of DNA replication. Required for the recruitment of the MCM2-7 helicase complex to the replication origins. This is Cell division cycle protein CDT1 (TAH11) from Saccharomyces cerevisiae (strain ATCC 204508 / S288c) (Baker's yeast).